The sequence spans 207 residues: FMN-dependent NADH:quinone oxidoreductase 2 (207 aa).

Residues serine 9, 15 to 17 (SAS), and 97 to 100 (MWNF) contribute to the FMN site.

It belongs to the azoreductase type 1 family. As to quaternary structure, homodimer. It depends on FMN as a cofactor.

The enzyme catalyses 2 a quinone + NADH + H(+) = 2 a 1,4-benzosemiquinone + NAD(+). It carries out the reaction N,N-dimethyl-1,4-phenylenediamine + anthranilate + 2 NAD(+) = 2-(4-dimethylaminophenyl)diazenylbenzoate + 2 NADH + 2 H(+). Quinone reductase that provides resistance to thiol-specific stress caused by electrophilic quinones. Functionally, also exhibits azoreductase activity. Catalyzes the reductive cleavage of the azo bond in aromatic azo compounds to the corresponding amines. The sequence is that of FMN-dependent NADH:quinone oxidoreductase 2 from Burkholderia lata (strain ATCC 17760 / DSM 23089 / LMG 22485 / NCIMB 9086 / R18194 / 383).